Consider the following 481-residue polypeptide: 1-acylglycerol-3-phosphate O-acyltransferase PNPLA3 (481 aa).

Over 1 to 41 (MYDAERGWSLSFAGCGFLGFYHVGATRCLSEHAPHLLRDAR) the chain is Cytoplasmic. One can recognise a PNPLA domain in the interval 10-179 (LSFAGCGFLG…SDNVPFIDAK (170 aa)). Residues 14–19 (GCGFLG) carry the GXGXXG motif. The helical; Signal-anchor for type II membrane protein transmembrane segment at 42–62 (MLFGASAGALHCVGVLSGIPL) threads the bilayer. Positions 45-49 (GASAG) match the GXSXG motif. Serine 47 (nucleophile) is an active-site residue. The Lumenal portion of the chain corresponds to 63 to 481 (EQTLQVLSDL…FPSFSLEKSL (419 aa)). The N-linked (GlcNAc...) asparagine glycan is linked to asparagine 89. Aspartate 166 functions as the Proton acceptor in the catalytic mechanism. A DGA/G motif is present at residues 166 to 168 (DGG). N-linked (GlcNAc...) asparagine glycosylation occurs at asparagine 280.

Its subcellular location is the membrane. It localises to the lipid droplet. It catalyses the reaction a 1-acyl-sn-glycero-3-phosphate + an acyl-CoA = a 1,2-diacyl-sn-glycero-3-phosphate + CoA. It carries out the reaction a triacylglycerol + H2O = a diacylglycerol + a fatty acid + H(+). The catalysed reaction is a 1-acylglycerol + a 1,3-diacylglycerol = a triacylglycerol + glycerol. The enzyme catalyses a 1-acylglycerol + a 1,2-diacylglycerol = a triacylglycerol + glycerol. It catalyses the reaction 2 a 1-acylglycerol = a 1,2-diacylglycerol + glycerol. It carries out the reaction 1-(9Z-octadecenoyl)-sn-glycero-3-phosphate + (9Z)-octadecenoyl-CoA = 1,2-di-(9Z-octadecenoyl)-sn-glycero-3-phosphate + CoA. The catalysed reaction is 1-(9Z-octadecenoyl)-sn-glycero-3-phosphate + hexadecanoyl-CoA = 1-(9Z)-octadecenoyl-2-hexadecanoyl-sn-glycero-3-phosphate + CoA. The enzyme catalyses 1-(9Z-octadecenoyl)-sn-glycero-3-phosphate + (9Z,12Z)-octadecadienoyl-CoA = 1-(9Z)-octadecenoyl-2-(9Z,12Z)-octadecadienoyl-sn-glycero-3-phosphate + CoA. It catalyses the reaction 1-(9Z-octadecenoyl)-sn-glycero-3-phosphate + (5Z,8Z,11Z,14Z)-eicosatetraenoyl-CoA = 1-(9Z)-octadecenoyl-2-(5Z,8Z,11Z,14Z)-eicosatetraenoyl-sn-glycero-3-phosphate + CoA. It carries out the reaction 2 1-(9Z-octadecenoyl)-glycerol = 1,2-di-(9Z-octadecenoyl)-glycerol + glycerol. The catalysed reaction is 1-(9Z-octadecenoyl)-glycerol + 1,2-di-(9Z-octadecenoyl)-glycerol = 1,2,3-tri-(9Z-octadecenoyl)-glycerol + glycerol. The enzyme catalyses 1-(9Z-octadecenoyl)-glycerol + 1,3-di-(9Z-octadecenoyl)-glycerol = 1,2,3-tri-(9Z-octadecenoyl)-glycerol + glycerol. It catalyses the reaction 1,2,3-tri-(9Z-octadecenoyl)-glycerol + H2O = 1,3-di-(9Z-octadecenoyl)-glycerol + (9Z)-octadecenoate + H(+). It carries out the reaction a 1,2-diacyl-sn-glycero-3-phosphocholine + H2O = a 1-acyl-sn-glycero-3-phosphocholine + a fatty acid + H(+). The protein operates within phospholipid metabolism. It participates in glycerolipid metabolism. With respect to regulation, the triglyceride lipase activity is inhibited by BEL ((E)-6-(bromomethylene)-3-(1-naphthalenyl)-2H-tetrahydropyran-2-one), a suicide substrate inhibitor. Functionally, specifically catalyzes coenzyme A (CoA)-dependent acylation of 1-acyl-sn-glycerol 3-phosphate (2-lysophosphatidic acid/LPA) to generate phosphatidic acid (PA), an important metabolic intermediate and precursor for both triglycerides and glycerophospholipids. Does not esterify other lysophospholipids. Acyl donors are long chain (at least C16) fatty acyl-CoAs: arachidonoyl-CoA, linoleoyl-CoA, oleoyl-CoA and at a lesser extent palmitoyl-CoA. Additionally possesses low triacylglycerol lipase and CoA-independent acylglycerol transacylase activities and thus may play a role in acyl-chain remodeling of triglycerides. In vitro may express hydrolytic activity against glycerolipids triacylglycerol, diacylglycerol and monoacylglycerol, with a strong preference for oleic acid as the acyl moiety. However, the triacylglycerol hydrolase activity is controversial and may be very low. Possesses phospholipase A2 activity. The polypeptide is 1-acylglycerol-3-phosphate O-acyltransferase PNPLA3 (Homo sapiens (Human)).